Consider the following 331-residue polypeptide: XylDLEGF operon transcriptional activator 1 (331 aa).

An HTH araC/xylS-type domain is found at 214–315; it reads ERVVQFIEEN…GELPSDTLRR (102 aa). DNA-binding regions (H-T-H motif) lie at residues 231 to 252 and 282 to 305; these read ERLA…EKHA and VTEM…RSTF.

It is found in the cytoplasm. Its function is as follows. Regulatory protein of the TOL plasmid xyl operons. XylS activates the xylXYZLTEGFJQKIH operon required for the degradation of toluene, m-xylene and p-xylene. The polypeptide is XylDLEGF operon transcriptional activator 1 (xylS1) (Pseudomonas putida (Arthrobacter siderocapsulatus)).